The chain runs to 240 residues: MFQRLNKMFVGEVSSSSNQEPEFNEKEDDEWILVDFIDTCTGFSAEEEEEEEDISEESPTEHPSVFSCLPASLECLADTSDSCFLQFESCPMEESWFITPPPCFTAGGLTTIKVETSPMENLLIEHPSMSVYAVHNSCPGLSEATRGTDELHSPSSPRVEAQNEMGQHIHCYVAALAAHTTFLEQPKSFRPSQWIKEHSERQPLNRNSLRRQNLTRDCHPRQVKHNGWVVHQPCPRQYNY.

The short motif at 25–37 is the LIR element; that stretch reads EKEDDEWILVDFI.

In terms of assembly, interacts with p53/TP53 and HIPK2. Interacts with PRKCG, GABARAP, GABARAPL1, GABARAPL2, MAP1LC3A, MAP1LC3B and MAP1LC3C. In terms of tissue distribution, ubiquitously expressed.

The protein resides in the cytoplasm. The protein localises to the cytosol. It is found in the nucleus. Its subcellular location is the PML body. It localises to the cytoplasmic vesicle. The protein resides in the autophagosome. Its function is as follows. Antiproliferative and proapoptotic protein involved in cell stress response which acts as a dual regulator of transcription and autophagy. Acts as a positive regulator of autophagy. In response to cellular stress or activation of autophagy, relocates to autophagosomes where it interacts with autophagosome-associated proteins GABARAP, GABARAPL1/L2, MAP1LC3A/B/C and regulates autophagy. Acts as an antioxidant and plays a major role in p53/TP53-driven oxidative stress response. Possesses both a p53/TP53-independent intracellular reactive oxygen species (ROS) regulatory function and a p53/TP53-dependent transcription regulatory function. Positively regulates p53/TP53 and p73/TP73 and stimulates their capacity to induce apoptosis and regulate cell cycle. In response to double-strand DNA breaks, promotes p53/TP53 phosphorylation on 'Ser-46' and subsequent apoptosis. Acts as a tumor suppressor by inducing cell death by an autophagy and caspase-dependent mechanism. Can reduce cell migration by regulating the expression of SPARC. The sequence is that of Tumor protein p53-inducible nuclear protein 1 (TP53INP1) from Homo sapiens (Human).